We begin with the raw amino-acid sequence, 353 residues long: Holliday junction branch migration complex subunit RuvB (353 aa).

The large ATPase domain (RuvB-L) stretch occupies residues 4–190; that stretch reads TDKLQAPRVI…FGIVARLEFY (187 aa). ATP is bound by residues Leu-29, Arg-30, Gly-71, Lys-74, Thr-75, Thr-76, 137–139, Arg-180, Tyr-190, and Arg-227; that span reads EDF. Thr-75 serves as a coordination point for Mg(2+). The tract at residues 191-261 is small ATPAse domain (RuvB-S); the sequence is TPHELAYIVG…VADAALLMLD (71 aa). Residues 264-353 are head domain (RuvB-H); it reads HLGLDLMDRK…DESAELFSAP (90 aa). 2 residues coordinate DNA: Arg-319 and Arg-324.

It belongs to the RuvB family. In terms of assembly, homohexamer. Forms an RuvA(8)-RuvB(12)-Holliday junction (HJ) complex. HJ DNA is sandwiched between 2 RuvA tetramers; dsDNA enters through RuvA and exits via RuvB. An RuvB hexamer assembles on each DNA strand where it exits the tetramer. Each RuvB hexamer is contacted by two RuvA subunits (via domain III) on 2 adjacent RuvB subunits; this complex drives branch migration. In the full resolvosome a probable DNA-RuvA(4)-RuvB(12)-RuvC(2) complex forms which resolves the HJ.

Its subcellular location is the cytoplasm. The enzyme catalyses ATP + H2O = ADP + phosphate + H(+). In terms of biological role, the RuvA-RuvB-RuvC complex processes Holliday junction (HJ) DNA during genetic recombination and DNA repair, while the RuvA-RuvB complex plays an important role in the rescue of blocked DNA replication forks via replication fork reversal (RFR). RuvA specifically binds to HJ cruciform DNA, conferring on it an open structure. The RuvB hexamer acts as an ATP-dependent pump, pulling dsDNA into and through the RuvAB complex. RuvB forms 2 homohexamers on either side of HJ DNA bound by 1 or 2 RuvA tetramers; 4 subunits per hexamer contact DNA at a time. Coordinated motions by a converter formed by DNA-disengaged RuvB subunits stimulates ATP hydrolysis and nucleotide exchange. Immobilization of the converter enables RuvB to convert the ATP-contained energy into a lever motion, pulling 2 nucleotides of DNA out of the RuvA tetramer per ATP hydrolyzed, thus driving DNA branch migration. The RuvB motors rotate together with the DNA substrate, which together with the progressing nucleotide cycle form the mechanistic basis for DNA recombination by continuous HJ branch migration. Branch migration allows RuvC to scan DNA until it finds its consensus sequence, where it cleaves and resolves cruciform DNA. The polypeptide is Holliday junction branch migration complex subunit RuvB (Aromatoleum aromaticum (strain DSM 19018 / LMG 30748 / EbN1) (Azoarcus sp. (strain EbN1))).